A 77-amino-acid polypeptide reads, in one-letter code: Conotoxin Vc6b (77 aa).

The N-terminal stretch at 1-22 (MKLTCMMIVAVLFLTANTFVTA) is a signal peptide. The propeptide occupies 23–47 (DDSGNGMENLFPKAGHEMENLEASN). 3 cysteine pairs are disulfide-bonded: C52-C66, C59-C72, and C67-C76.

As to expression, expressed by the venom duct.

Its subcellular location is the secreted. The protein is Conotoxin Vc6b of Conus victoriae (Queen Victoria cone).